The chain runs to 343 residues: ATP-dependent (S)-NAD(P)H-hydrate dehydratase (343 aa).

The N-terminal 42 residues, 1–42 (MAVHACGAAAAVVALLSAAIALQWSPLYAVLQRALSLHTAHA), are a transit peptide targeting the mitochondrion. One can recognise a YjeF C-terminal domain in the interval 49–340 (LFQLVRNIVP…TEVGTAFSRL (292 aa)). An N6-acetyllysine modification is found at lysine 63. Tyrosine 81 carries the phosphotyrosine modification. (6S)-NADPHX contacts are provided by residues glycine 149 and 202 to 208 (NHVEFSR). Position 216 is a phosphoserine (serine 216). ATP contacts are provided by residues 242–246 (KGEQD) and 261–270 (GSSRRCGGQG). Aspartate 271 serves as a coordination point for (6S)-NADPHX.

The protein belongs to the NnrD/CARKD family. Mg(2+) serves as cofactor.

Its subcellular location is the mitochondrion. It catalyses the reaction (6S)-NADHX + ATP = ADP + phosphate + NADH + H(+). It carries out the reaction (6S)-NADPHX + ATP = ADP + phosphate + NADPH + H(+). In terms of biological role, catalyzes the dehydration of the S-form of NAD(P)HX at the expense of ATP, which is converted to ADP. Together with NAD(P)HX epimerase, which catalyzes the epimerization of the S- and R-forms, the enzyme allows the repair of both epimers of NAD(P)HX, a damaged form of NAD(P)H that is a result of enzymatic or heat-dependent hydration. The polypeptide is ATP-dependent (S)-NAD(P)H-hydrate dehydratase (Mus musculus (Mouse)).